A 117-amino-acid polypeptide reads, in one-letter code: 3',5'-cyclic-AMP phosphodiesterase 4A (117 aa).

The segment at 42–79 is disordered; sequence KQNEVEIPSPTMKDREPQEAPRQRPCQQLPPPVPHLQP. The span at 53–63 shows a compositional bias: basic and acidic residues; it reads MKDREPQEAPR. Residues 78–117 are catalytic; that stretch reads QPMSQITGVKRLSHNSGLNNASIPRFGVKTDQEELLAQEL.

The protein belongs to the cyclic nucleotide phosphodiesterase family. PDE4 subfamily. As to quaternary structure, interacts with LYN (via SH3 domain). Interacts with ARRB2. The cofactor is Zn(2+). It depends on Mg(2+) as a cofactor. Mn(2+) is required as a cofactor. Post-translationally, proteolytically cleaved by CASP3.

The protein resides in the cytoplasm. It localises to the cytosol. It is found in the membrane. The enzyme catalyses 3',5'-cyclic AMP + H2O = AMP + H(+). It participates in purine metabolism; 3',5'-cyclic AMP degradation; AMP from 3',5'-cyclic AMP: step 1/1. Functionally, hydrolyzes the second messenger 3',5'-cyclic AMP (cAMP), which is a key regulator of many important physiological processes. The protein is 3',5'-cyclic-AMP phosphodiesterase 4A (PDE4A) of Cavia porcellus (Guinea pig).